Reading from the N-terminus, the 335-residue chain is Ketol-acid reductoisomerase (NADP(+)) (335 aa).

Positions 2 to 182 (AKIIYDNETT…GATRAGVYET (181 aa)) constitute a KARI N-terminal Rossmann domain. Residues 25–28 (YGSQ), R48, S51, S53, and 83–86 (DENQ) contribute to the NADP(+) site. Residue H108 is part of the active site. G134 provides a ligand contact to NADP(+). In terms of domain architecture, KARI C-terminal knotted spans 183–328 (TFREETETDL…KQIRANIPWL (146 aa)). 4 residues coordinate Mg(2+): D191, E195, E227, and E231. S252 is a binding site for substrate.

The protein belongs to the ketol-acid reductoisomerase family. Mg(2+) serves as cofactor.

It carries out the reaction (2R)-2,3-dihydroxy-3-methylbutanoate + NADP(+) = (2S)-2-acetolactate + NADPH + H(+). It catalyses the reaction (2R,3R)-2,3-dihydroxy-3-methylpentanoate + NADP(+) = (S)-2-ethyl-2-hydroxy-3-oxobutanoate + NADPH + H(+). It participates in amino-acid biosynthesis; L-isoleucine biosynthesis; L-isoleucine from 2-oxobutanoate: step 2/4. Its pathway is amino-acid biosynthesis; L-valine biosynthesis; L-valine from pyruvate: step 2/4. Involved in the biosynthesis of branched-chain amino acids (BCAA). Catalyzes an alkyl-migration followed by a ketol-acid reduction of (S)-2-acetolactate (S2AL) to yield (R)-2,3-dihydroxy-isovalerate. In the isomerase reaction, S2AL is rearranged via a Mg-dependent methyl migration to produce 3-hydroxy-3-methyl-2-ketobutyrate (HMKB). In the reductase reaction, this 2-ketoacid undergoes a metal-dependent reduction by NADPH to yield (R)-2,3-dihydroxy-isovalerate. The polypeptide is Ketol-acid reductoisomerase (NADP(+)) (Methanosarcina barkeri (strain Fusaro / DSM 804)).